Consider the following 373-residue polypeptide: Chaperone protein DnaJ (373 aa).

The J domain occupies aspartate 5–glycine 69. The segment at glycine 130–threonine 212 adopts a CR-type zinc-finger fold. Zn(2+)-binding residues include cysteine 143, cysteine 146, cysteine 160, cysteine 163, cysteine 186, cysteine 189, cysteine 200, and cysteine 203. 4 CXXCXGXG motif repeats span residues cysteine 143–glycine 150, cysteine 160–glycine 167, cysteine 186–glycine 193, and cysteine 200–glycine 207.

This sequence belongs to the DnaJ family. Homodimer. Zn(2+) is required as a cofactor.

It localises to the cytoplasm. Participates actively in the response to hyperosmotic and heat shock by preventing the aggregation of stress-denatured proteins and by disaggregating proteins, also in an autonomous, DnaK-independent fashion. Unfolded proteins bind initially to DnaJ; upon interaction with the DnaJ-bound protein, DnaK hydrolyzes its bound ATP, resulting in the formation of a stable complex. GrpE releases ADP from DnaK; ATP binding to DnaK triggers the release of the substrate protein, thus completing the reaction cycle. Several rounds of ATP-dependent interactions between DnaJ, DnaK and GrpE are required for fully efficient folding. Also involved, together with DnaK and GrpE, in the DNA replication of plasmids through activation of initiation proteins. The protein is Chaperone protein DnaJ of Staphylococcus epidermidis (strain ATCC 12228 / FDA PCI 1200).